We begin with the raw amino-acid sequence, 103 residues long: CLAVATA3/ESR (CLE)-related protein 16 (103 aa).

An N-terminal signal peptide occupies residues 1-21; it reads MEACSRKRRRRRAYTTSTTGY. Residues 71-103 are disordered; it reads VSFTGQRREEENRDEVYKDDKRLVHTGPNPLHN. Basic and acidic residues predominate over residues 76–93; that stretch reads QRREEENRDEVYKDDKRL. Pro98 bears the Hydroxyproline mark. O-linked (Ara...) hydroxyproline glycosylation occurs at Pro98.

The protein belongs to the CLV3/ESR signal peptide family. In terms of processing, the O-glycosylation (arabinosylation) of the hydroxyproline Pro-98 enhances binding affinity of the CLE16p peptide for its receptor. As to expression, expressed in roots, stems, apex, seedlings, leaves, flowers and siliques.

It is found in the secreted. The protein localises to the extracellular space. Its function is as follows. Extracellular signal peptide that regulates cell fate. Represses root apical meristem maintenance. Regulates the transition of protophloem cells from proliferation to differentiation, thus impinging on postembryonic growth capacity of the root meristem; this signaling pathway requires CRN and CLV2. The sequence is that of CLAVATA3/ESR (CLE)-related protein 16 from Arabidopsis thaliana (Mouse-ear cress).